Reading from the N-terminus, the 489-residue chain is Bifunctional protein HldE (489 aa).

The segment at 1 to 330 (MFDFDGLSNA…RKILPPAFLA (330 aa)) is ribokinase. An ATP-binding site is contributed by 205–208 (NRKE). Residue Asp-275 is part of the active site. Residues 358–489 (FTNGCFDILH…SLVKRAGGRA (132 aa)) are cytidylyltransferase.

It in the N-terminal section; belongs to the carbohydrate kinase PfkB family. In the C-terminal section; belongs to the cytidylyltransferase family. In terms of assembly, homodimer.

The catalysed reaction is D-glycero-beta-D-manno-heptose 7-phosphate + ATP = D-glycero-beta-D-manno-heptose 1,7-bisphosphate + ADP + H(+). It catalyses the reaction D-glycero-beta-D-manno-heptose 1-phosphate + ATP + H(+) = ADP-D-glycero-beta-D-manno-heptose + diphosphate. It participates in nucleotide-sugar biosynthesis; ADP-L-glycero-beta-D-manno-heptose biosynthesis; ADP-L-glycero-beta-D-manno-heptose from D-glycero-beta-D-manno-heptose 7-phosphate: step 1/4. It functions in the pathway nucleotide-sugar biosynthesis; ADP-L-glycero-beta-D-manno-heptose biosynthesis; ADP-L-glycero-beta-D-manno-heptose from D-glycero-beta-D-manno-heptose 7-phosphate: step 3/4. Catalyzes the phosphorylation of D-glycero-D-manno-heptose 7-phosphate at the C-1 position to selectively form D-glycero-beta-D-manno-heptose-1,7-bisphosphate. Its function is as follows. Catalyzes the ADP transfer from ATP to D-glycero-beta-D-manno-heptose 1-phosphate, yielding ADP-D-glycero-beta-D-manno-heptose. The sequence is that of Bifunctional protein HldE from Nitrobacter hamburgensis (strain DSM 10229 / NCIMB 13809 / X14).